A 294-amino-acid chain; its full sequence is 4-hydroxy-tetrahydrodipicolinate synthase (294 aa).

A pyruvate-binding site is contributed by threonine 47. Tyrosine 135 serves as the catalytic Proton donor/acceptor. Catalysis depends on lysine 163, which acts as the Schiff-base intermediate with substrate. Valine 205 serves as a coordination point for pyruvate.

This sequence belongs to the DapA family. In terms of assembly, homotetramer; dimer of dimers.

The protein resides in the cytoplasm. The enzyme catalyses L-aspartate 4-semialdehyde + pyruvate = (2S,4S)-4-hydroxy-2,3,4,5-tetrahydrodipicolinate + H2O + H(+). It functions in the pathway amino-acid biosynthesis; L-lysine biosynthesis via DAP pathway; (S)-tetrahydrodipicolinate from L-aspartate: step 3/4. Its function is as follows. Catalyzes the condensation of (S)-aspartate-beta-semialdehyde [(S)-ASA] and pyruvate to 4-hydroxy-tetrahydrodipicolinate (HTPA). The polypeptide is 4-hydroxy-tetrahydrodipicolinate synthase (Rickettsia canadensis (strain McKiel)).